A 199-amino-acid polypeptide reads, in one-letter code: MEKFETVNGVAVPFRRSNVDTDQIIPAVFLKRVTKTGFDDALFHAWRQDPGFILNQEAYQGATVLIAGPDFGTGSSREHAVWALRDYGFRVVLSPRFADIFRGNSGKQGLLTGVISEEDAERLWGAIEAQPGITATVDLVAKTATVGEVQVSFDIDHYTRWRLLEGLDDIALTLRDEVRISEYEAARARWRPKTLPVKL.

It belongs to the LeuD family. LeuD type 1 subfamily. Heterodimer of LeuC and LeuD.

The enzyme catalyses (2R,3S)-3-isopropylmalate = (2S)-2-isopropylmalate. It functions in the pathway amino-acid biosynthesis; L-leucine biosynthesis; L-leucine from 3-methyl-2-oxobutanoate: step 2/4. Catalyzes the isomerization between 2-isopropylmalate and 3-isopropylmalate, via the formation of 2-isopropylmaleate. The polypeptide is 3-isopropylmalate dehydratase small subunit (Leifsonia xyli subsp. xyli (strain CTCB07)).